The primary structure comprises 85 residues: MDTIIDAIASLPQDTLIVAVLYLGLSLLYLLIIPGFVYFYLNSRWYVASSFERAFMYFLMFFFFPGVLLLSPFLNFRPKRRQVNS.

2 helical membrane passes run 17–37 and 54–74; these read IVAVLYLGLSLLYLLIIPGFV and AFMYFLMFFFFPGVLLLSPFL.

Belongs to the complex I NdhL subunit family. As to quaternary structure, NDH-1 can be composed of about 15 different subunits; different subcomplexes with different compositions have been identified which probably have different functions.

It is found in the cellular thylakoid membrane. The enzyme catalyses a plastoquinone + NADH + (n+1) H(+)(in) = a plastoquinol + NAD(+) + n H(+)(out). It catalyses the reaction a plastoquinone + NADPH + (n+1) H(+)(in) = a plastoquinol + NADP(+) + n H(+)(out). NDH-1 shuttles electrons from an unknown electron donor, via FMN and iron-sulfur (Fe-S) centers, to quinones in the respiratory and/or the photosynthetic chain. The immediate electron acceptor for the enzyme in this species is believed to be plastoquinone. Couples the redox reaction to proton translocation, and thus conserves the redox energy in a proton gradient. Cyanobacterial NDH-1 also plays a role in inorganic carbon-concentration. This Crocosphaera subtropica (strain ATCC 51142 / BH68) (Cyanothece sp. (strain ATCC 51142)) protein is NAD(P)H-quinone oxidoreductase subunit L.